The primary structure comprises 334 residues: Malate dehydrogenase (334 aa).

17–23 (GAAGQIG) provides a ligand contact to NAD(+). Arg98 and Arg104 together coordinate substrate. NAD(+) is bound by residues Asn111, Gln118, and 135 to 137 (VGN). Residues Asn137 and Arg168 each coordinate substrate. His193 functions as the Proton acceptor in the catalytic mechanism.

It belongs to the LDH/MDH superfamily. MDH type 2 family.

The catalysed reaction is (S)-malate + NAD(+) = oxaloacetate + NADH + H(+). Functionally, catalyzes the reversible oxidation of malate to oxaloacetate. This chain is Malate dehydrogenase, found in Deinococcus geothermalis (strain DSM 11300 / CIP 105573 / AG-3a).